The chain runs to 198 residues: (S)-2-hydroxypropylphosphonic acid epoxidase (198 aa).

Positions 15 to 70 (LKDRREQVKMDHAALASLLGETPETVAAWENGEGGELTLTQLGRIAHVLGTSIGAL) constitute an HTH cro/C1-type domain. Substrate is bound at residue K23. The segment at residues 26-45 (HAALASLLGETPETVAAWEN) is a DNA-binding region (H-T-H motif). Substrate-binding positions include R97, Y105, 135-138 (NSGH), and E142. In terms of domain architecture, Cupin type-2 spans 136–196 (SGHAGNEFLF…GTGSAKLIAV (61 aa)). Fe cation is bound by residues H138, E142, and H180.

It belongs to the non-heme iron-dependent dioxygenase family. Homotetramer. Fe(2+) is required as a cofactor.

The enzyme catalyses (S)-2-hydroxypropylphosphonate + H2O2 = (1R,2S)-epoxypropylphosphonate + 2 H2O. It functions in the pathway antibiotic biosynthesis; fosfomycin biosynthesis. In terms of biological role, non-heme-dependent dioxygenase that catalyzes the oxidative epoxidation of (S)-2-hydroxypropylphosphonate into (1R,2S)-epoxypropylphosphonate, the final step in the biosynthesis of fosfomycin antibiotic. This Streptomyces wedmorensis protein is (S)-2-hydroxypropylphosphonic acid epoxidase (hppE).